A 97-amino-acid polypeptide reads, in one-letter code: MSRKCELTGVGVLYGNNVSHSQRKTRRRFEPNLRSVKFTSDITAGEYRLSVNARCISSVEKAGGFDAYILKADDNVLSSNARTIKKKIIQTKTAKSL.

Belongs to the bacterial ribosomal protein bL28 family.

This is Large ribosomal subunit protein bL28 from Rickettsia felis (strain ATCC VR-1525 / URRWXCal2) (Rickettsia azadi).